We begin with the raw amino-acid sequence, 99 residues long: DNA-directed RNA polymerase subunit omega (99 aa).

The protein belongs to the RNA polymerase subunit omega family. In terms of assembly, the RNAP catalytic core consists of 2 alpha, 1 beta, 1 beta' and 1 omega subunit. When a sigma factor is associated with the core the holoenzyme is formed, which can initiate transcription.

The enzyme catalyses RNA(n) + a ribonucleoside 5'-triphosphate = RNA(n+1) + diphosphate. Its function is as follows. Promotes RNA polymerase assembly. Latches the N- and C-terminal regions of the beta' subunit thereby facilitating its interaction with the beta and alpha subunits. The chain is DNA-directed RNA polymerase subunit omega from Xanthomonas axonopodis pv. citri (strain 306).